The primary structure comprises 1854 residues: Calcium-channel protein cch1 (1854 aa).

Residues 1-15 (MSSSSNSDPSSSPDN) are compositionally biased toward low complexity. The segment at 1 to 33 (MSSSSNSDPSSSPDNTDFIPLKDNPKDTSSYIN) is disordered. A glycan (N-linked (GlcNAc...) asparagine) is linked at Asn-40. Transmembrane regions (helical) follow at residues 184-204 (HPLY…LLMI), 220-240 (IIVI…LFGF), and 274-294 (DFVA…QGIF). Asn-310 carries an N-linked (GlcNAc...) asparagine glycan. 8 helical membrane-spanning segments follow: residues 328-348 (PLVQ…ILGV), 427-447 (FFNS…TDIM), 461-481 (LFII…IAVV), 514-534 (YLFY…VTLC), 549-569 (LIFY…RFFA), 581-601 (YTNL…LPSI), 606-626 (VAFG…ILLI), and 642-662 (QLLN…LCAV). N-linked (GlcNAc...) asparagine glycosylation occurs at Asn-699. A helical transmembrane segment spans residues 723-743 (FFTLWFLFSNNVVLSMFIAVI). Asn-786 carries N-linked (GlcNAc...) asparagine glycosylation. Transmembrane regions (helical) follow at residues 946 to 966 (VFIY…TPIY), 980 to 1000 (FVWT…IKII), and 1021 to 1041 (FFVL…HALL). The N-linked (GlcNAc...) asparagine glycan is linked to Asn-1058. The next 2 helical transmembrane spans lie at 1075 to 1095 (FFKI…FALW) and 1148 to 1168 (FPHA…VDIM). A glycan (N-linked (GlcNAc...) asparagine) is linked at Asn-1184. A run of 4 helical transmembrane segments spans residues 1193–1213 (FVLF…AIII), 1274–1294 (FTGL…PCPI), 1302–1322 (SIFL…VYGL), and 1331–1351 (FWNM…IAIL). An N-linked (GlcNAc...) asparagine glycan is attached at Asn-1356. 3 consecutive transmembrane segments (helical) span residues 1358–1378 (SLTL…IPKF), 1393–1413 (PSIF…AIAF), and 1486–1506 (FIAW…TVVF). N-linked (GlcNAc...) asparagine glycosylation is found at Asn-1508 and Asn-1773. The segment at 1764-1792 (TIASGEGDDNHSVEDHLKVPTDNEPRRSP) is disordered. Over residues 1771 to 1790 (DDNHSVEDHLKVPTDNEPRR) the composition is skewed to basic and acidic residues.

This sequence belongs to the calcium channel alpha-1 subunit (TC 1.A.1.11) family. As to quaternary structure, interacts with yam8 to form a Ca(2+) influx channel.

It localises to the cell membrane. Voltage-gated, high-affinity calcium channel that functions together with yam8 to mediate calcium entry into cells. Required during conditions of environmental stress. The chain is Calcium-channel protein cch1 (cch1) from Schizosaccharomyces pombe (strain 972 / ATCC 24843) (Fission yeast).